A 170-amino-acid chain; its full sequence is Peptide deformylase (170 aa).

Positions 94 and 136 each coordinate Fe cation. Residue glutamate 137 is part of the active site. Histidine 140 provides a ligand contact to Fe cation.

This sequence belongs to the polypeptide deformylase family. It depends on Fe(2+) as a cofactor.

It carries out the reaction N-terminal N-formyl-L-methionyl-[peptide] + H2O = N-terminal L-methionyl-[peptide] + formate. Its function is as follows. Removes the formyl group from the N-terminal Met of newly synthesized proteins. Requires at least a dipeptide for an efficient rate of reaction. N-terminal L-methionine is a prerequisite for activity but the enzyme has broad specificity at other positions. In Wolinella succinogenes (strain ATCC 29543 / DSM 1740 / CCUG 13145 / JCM 31913 / LMG 7466 / NCTC 11488 / FDC 602W) (Vibrio succinogenes), this protein is Peptide deformylase.